The following is a 148-amino-acid chain: MFRTMMKSKIHRATVTHADLHYVGSVTVDQDLMDAADLLEGEQVCIVDIDNGARLETYVIAGERGSGVIGINGAAAHLVKPGDLVILIAYGVMNEQEVRDYEPRVVFVDAANTPVDLGADPAHAPEGSGLITPRMLSTLDAERESSLV.

The active-site Schiff-base intermediate with substrate; via pyruvic acid is the serine 25. The residue at position 25 (serine 25) is a Pyruvic acid (Ser). Threonine 57 is a binding site for substrate. The Proton donor role is filled by tyrosine 58. 73-75 (GAA) provides a ligand contact to substrate.

It belongs to the PanD family. Heterooctamer of four alpha and four beta subunits. Pyruvate serves as cofactor. In terms of processing, is synthesized initially as an inactive proenzyme, which is activated by self-cleavage at a specific serine bond to produce a beta-subunit with a hydroxyl group at its C-terminus and an alpha-subunit with a pyruvoyl group at its N-terminus.

The protein resides in the cytoplasm. It carries out the reaction L-aspartate + H(+) = beta-alanine + CO2. It functions in the pathway cofactor biosynthesis; (R)-pantothenate biosynthesis; beta-alanine from L-aspartate: step 1/1. Functionally, catalyzes the pyruvoyl-dependent decarboxylation of aspartate to produce beta-alanine. The polypeptide is Aspartate 1-decarboxylase (Rhodococcus opacus (strain B4)).